The chain runs to 426 residues: D-tagatose-1,6-bisphosphate aldolase subunit KbaZ (426 aa).

It belongs to the GatZ/KbaZ family. KbaZ subfamily. As to quaternary structure, forms a complex with KbaY.

The protein operates within carbohydrate metabolism; D-tagatose 6-phosphate degradation; D-glyceraldehyde 3-phosphate and glycerone phosphate from D-tagatose 6-phosphate: step 2/2. Component of the tagatose-1,6-bisphosphate aldolase KbaYZ that is required for full activity and stability of the Y subunit. Could have a chaperone-like function for the proper and stable folding of KbaY. When expressed alone, KbaZ does not show any aldolase activity. In Escherichia coli (strain ATCC 8739 / DSM 1576 / NBRC 3972 / NCIMB 8545 / WDCM 00012 / Crooks), this protein is D-tagatose-1,6-bisphosphate aldolase subunit KbaZ.